A 244-amino-acid polypeptide reads, in one-letter code: Phosphatidylinositol phosphate synthase (244 aa).

A run of 3 helical transmembrane segments spans residues 24–42, 49–66, and 72–91; these read YARA…FLIR, TVTL…LVFY, and FWGT…DGNM. A CDP-1,2-diacyl-sn-glycerol is bound at residue 48 to 51; it reads DTVT. Asp85 and Asp88 together coordinate Mg(2+). Gly89, Arg93, and Ser99 together coordinate a CDP-1,2-diacyl-sn-glycerol. Mg(2+) contacts are provided by Asp106 and Asp110. Asp110 functions as the Proton acceptor in the catalytic mechanism. Helical transmembrane passes span 117–137, 174–190, and 196–214; these read IFGG…LCAV, LVIS…HKFG, and VLLP…VTLI.

This sequence belongs to the CDP-alcohol phosphatidyltransferase class-I family. In terms of assembly, homodimer. It depends on Mg(2+) as a cofactor.

It is found in the cell membrane. It catalyses the reaction a CDP-1,2-diacyl-sn-glycerol + 1D-myo-inositol 3-phosphate = a 1,2-diacyl-sn-glycero-3-phospho-(1D-myo-inositol-3-phosphate) + CMP + H(+). It carries out the reaction 1,2-di-(9Z-octadecenoyl)-sn-glycero-3-cytidine-5'-diphosphate + 1D-myo-inositol 3-phosphate = 1,2-di-(9Z-octadecenoyl)-sn-glycero-3-phospho-(1D-myo-inositol-3-phosphate) + CMP + H(+). Its pathway is phospholipid metabolism; phosphatidylinositol phosphate biosynthesis. Its function is as follows. Catalyzes the conjugation of the 1'-hydroxyl group of D-myo-inositol-3-phosphate (also named L-myo-inositol-1-phosphate) with a lipid tail of cytidine diphosphate diacylglycerol (CDP-DAG), forming phosphatidylinositol phosphate (PIP) and CMP. PIP is a precursor of phosphatidylinositol (PI) which is an essential lipid required for cell wall formation. This Streptomyces avermitilis (strain ATCC 31267 / DSM 46492 / JCM 5070 / NBRC 14893 / NCIMB 12804 / NRRL 8165 / MA-4680) protein is Phosphatidylinositol phosphate synthase.